The sequence spans 48 residues: MNKQRFLFAAKISGIHFLLSLVVALALAGLIFFVWYPFPYQKIMGSFK.

This Dichelobacter nodosus (Bacteroides nodosus) protein is Fimbrial assembly protein, serogroup A1 (fimB).